A 102-amino-acid polypeptide reads, in one-letter code: Integration host factor subunit alpha (102 aa).

This sequence belongs to the bacterial histone-like protein family. Heterodimer of an alpha and a beta chain.

Functionally, this protein is one of the two subunits of integration host factor, a specific DNA-binding protein that functions in genetic recombination as well as in transcriptional and translational control. The protein is Integration host factor subunit alpha of Paracoccus denitrificans (strain Pd 1222).